Consider the following 313-residue polypeptide: tRNA dimethylallyltransferase (313 aa).

11 to 18 (GPTAAGKS) provides a ligand contact to ATP. 13–18 (TAAGKS) contacts substrate. Interaction with substrate tRNA stretches follow at residues 36–39 (DSAT), 160–164 (QRIQR), and 244–249 (RCVGYR).

The protein belongs to the IPP transferase family. As to quaternary structure, monomer. Mg(2+) is required as a cofactor.

It catalyses the reaction adenosine(37) in tRNA + dimethylallyl diphosphate = N(6)-dimethylallyladenosine(37) in tRNA + diphosphate. Functionally, catalyzes the transfer of a dimethylallyl group onto the adenine at position 37 in tRNAs that read codons beginning with uridine, leading to the formation of N6-(dimethylallyl)adenosine (i(6)A). The protein is tRNA dimethylallyltransferase of Bordetella pertussis (strain Tohama I / ATCC BAA-589 / NCTC 13251).